The following is a 141-amino-acid chain: Methylglyoxal synthase (141 aa).

In terms of domain architecture, MGS-like spans 1-141 (MNIALIAHDK…PKLQKNKSDK (141 aa)). Substrate contacts are provided by residues histidine 8, lysine 12, and 34–37 (TGTT). The active-site Proton donor/acceptor is aspartate 60. Histidine 87 contacts substrate.

This sequence belongs to the methylglyoxal synthase family.

The catalysed reaction is dihydroxyacetone phosphate = methylglyoxal + phosphate. Its function is as follows. Catalyzes the formation of methylglyoxal from dihydroxyacetone phosphate. This chain is Methylglyoxal synthase, found in Caldicellulosiruptor bescii (strain ATCC BAA-1888 / DSM 6725 / KCTC 15123 / Z-1320) (Anaerocellum thermophilum).